Consider the following 432-residue polypeptide: Homogentisate 1,2-dioxygenase (432 aa).

His287 serves as the catalytic Proton acceptor. Positions 330 and 336 each coordinate Fe cation. The homogentisate site is built by Tyr345 and His366. His366 serves as a coordination point for Fe cation.

This sequence belongs to the homogentisate dioxygenase family. As to quaternary structure, hexamer; dimer of trimers. Fe cation serves as cofactor.

It carries out the reaction homogentisate + O2 = 4-maleylacetoacetate + H(+). It functions in the pathway amino-acid degradation; L-phenylalanine degradation; acetoacetate and fumarate from L-phenylalanine: step 4/6. Its function is as follows. Involved in the catabolism of homogentisate (2,5-dihydroxyphenylacetate or 2,5-OH-PhAc), a central intermediate in the degradation of phenylalanine and tyrosine. Catalyzes the oxidative ring cleavage of the aromatic ring of homogentisate to yield maleylacetoacetate. The protein is Homogentisate 1,2-dioxygenase of Pseudomonas aeruginosa (strain UCBPP-PA14).